The primary structure comprises 311 residues: Putative S-adenosyl-L-methionine-dependent methyltransferase MRA_0152 (311 aa).

S-adenosyl-L-methionine is bound by residues Asp135 and 164 to 165; that span reads DL.

The protein belongs to the UPF0677 family.

Exhibits S-adenosyl-L-methionine-dependent methyltransferase activity. This Mycobacterium tuberculosis (strain ATCC 25177 / H37Ra) protein is Putative S-adenosyl-L-methionine-dependent methyltransferase MRA_0152.